The primary structure comprises 329 residues: UDP-glucose 4-epimerase (329 aa).

NAD(+) is bound by residues 13 to 14 (YV), 33 to 38 (HNLSTG), 53 to 54 (DI), 76 to 80 (FAAFS), Asn-95, Thr-120, Tyr-144, Lys-148, and Phe-172. Substrate contacts are provided by Thr-120 and Tyr-144. Tyr-144 functions as the Proton acceptor in the catalytic mechanism. Substrate is bound by residues Asn-173, 190–191 (HL), 207–209 (SVY), Arg-221, and 281–284 (RGRD).

This sequence belongs to the NAD(P)-dependent epimerase/dehydratase family. As to quaternary structure, homodimer. The cofactor is NAD(+).

It catalyses the reaction UDP-alpha-D-glucose = UDP-alpha-D-galactose. The protein operates within carbohydrate metabolism; galactose metabolism. Involved in the metabolism of galactose. Catalyzes the conversion of UDP-galactose (UDP-Gal) to UDP-glucose (UDP-Glc) through a mechanism involving the transient reduction of NAD. This chain is UDP-glucose 4-epimerase (galE), found in Streptomyces lividans.